The chain runs to 591 residues: Potassium-transporting ATPase potassium-binding subunit (591 aa).

10 helical membrane passes run 6-26, 63-83, 137-157, 179-199, 272-292, 303-323, 405-425, 444-464, 510-530, and 553-573; these read WFQI…LGVF, WTEY…MLYI, GLAY…IAFI, VLWV…SQGV, LSNL…TYTL, WAVW…VYWA, AGMY…GLMV, AMLV…ISSV, VAIG…MLAI, and LFSV…FFPA.

This sequence belongs to the KdpA family. As to quaternary structure, the system is composed of three essential subunits: KdpA, KdpB and KdpC.

It localises to the cell inner membrane. In terms of biological role, part of the high-affinity ATP-driven potassium transport (or Kdp) system, which catalyzes the hydrolysis of ATP coupled with the electrogenic transport of potassium into the cytoplasm. This subunit binds the periplasmic potassium ions and delivers the ions to the membrane domain of KdpB through an intramembrane tunnel. This chain is Potassium-transporting ATPase potassium-binding subunit, found in Koribacter versatilis (strain Ellin345).